Here is a 343-residue protein sequence, read N- to C-terminus: Glyceraldehyde-3-phosphate dehydrogenase (343 aa).

Residues 13–14 (TI) and Gly-111 each bind NAD(+). 140-142 (SCN) serves as a coordination point for D-glyceraldehyde 3-phosphate. Cys-141 acts as the Nucleophile in catalysis. Position 169 (Arg-169) interacts with NAD(+). Residue 195–196 (HA) coordinates D-glyceraldehyde 3-phosphate. NAD(+) is bound at residue Gln-303.

The protein belongs to the glyceraldehyde-3-phosphate dehydrogenase family. In terms of assembly, homotetramer.

It is found in the cytoplasm. It catalyses the reaction D-glyceraldehyde 3-phosphate + phosphate + NADP(+) = (2R)-3-phospho-glyceroyl phosphate + NADPH + H(+). The enzyme catalyses D-glyceraldehyde 3-phosphate + phosphate + NAD(+) = (2R)-3-phospho-glyceroyl phosphate + NADH + H(+). It functions in the pathway carbohydrate degradation; glycolysis; pyruvate from D-glyceraldehyde 3-phosphate: step 1/5. This Sulfurisphaera tokodaii (strain DSM 16993 / JCM 10545 / NBRC 100140 / 7) (Sulfolobus tokodaii) protein is Glyceraldehyde-3-phosphate dehydrogenase.